The sequence spans 274 residues: NH(3)-dependent NAD(+) synthetase (274 aa).

46 to 53 (GISGGQDS) provides a ligand contact to ATP. Position 52 (D52) interacts with Mg(2+). Residue R140 participates in deamido-NAD(+) binding. Residue T160 participates in ATP binding. E165 serves as a coordination point for Mg(2+). Residues K173 and D180 each contribute to the deamido-NAD(+) site. Residues K189 and T211 each contribute to the ATP site. A deamido-NAD(+)-binding site is contributed by 260 to 261 (HK).

The protein belongs to the NAD synthetase family. As to quaternary structure, homodimer.

The enzyme catalyses deamido-NAD(+) + NH4(+) + ATP = AMP + diphosphate + NAD(+) + H(+). Its pathway is cofactor biosynthesis; NAD(+) biosynthesis; NAD(+) from deamido-NAD(+) (ammonia route): step 1/1. Catalyzes the ATP-dependent amidation of deamido-NAD to form NAD. Uses ammonia as a nitrogen source. This chain is NH(3)-dependent NAD(+) synthetase, found in Streptococcus pyogenes serotype M1.